We begin with the raw amino-acid sequence, 199 residues long: Zinc finger matrin-type protein 2 (199 aa).

Ala-2 is modified (N-acetylalanine). Glycyl lysine isopeptide (Lys-Gly) (interchain with G-Cter in SUMO2) cross-links involve residues Lys-8, Lys-36, Lys-39, Lys-45, Lys-55, Lys-61, Lys-64, Lys-70, Lys-102, and Lys-123. The interval 27 to 46 is disordered; the sequence is KRLTEEREKKDGKPVQPVKR. A Matrin-type zinc finger spans residues 80–104; sequence YYCNVCDCVVKDSINFLDHINGKKH. The span at 150-173 shows a compositional bias: basic and acidic residues; it reads REEEEKAKAYKKEKQKEKKRRAEE. Positions 150–175 are disordered; sequence REEEEKAKAYKKEKQKEKKRRAEEDL.

In terms of assembly, component of the spliceosome B complex.

The protein resides in the nucleus. Involved in pre-mRNA splicing as a component of the spliceosome. This Homo sapiens (Human) protein is Zinc finger matrin-type protein 2 (ZMAT2).